A 166-amino-acid chain; its full sequence is Small ribosomal subunit protein uS5 (166 aa).

The S5 DRBM domain occupies 11–74 (LREKLVAINR…EKARANMKRV (64 aa)).

Belongs to the universal ribosomal protein uS5 family. In terms of assembly, part of the 30S ribosomal subunit. Contacts proteins S4 and S8.

With S4 and S12 plays an important role in translational accuracy. In terms of biological role, located at the back of the 30S subunit body where it stabilizes the conformation of the head with respect to the body. The sequence is that of Small ribosomal subunit protein uS5 from Alkalilimnicola ehrlichii (strain ATCC BAA-1101 / DSM 17681 / MLHE-1).